Consider the following 175-residue polypeptide: Receptor activity-modifying protein 2 (175 aa).

A signal peptide spans 1–42 (MASLRVERAGGPRLPRTRVGRPAALRLLLLLGAVLNPHEALA). Over 43 to 143 (QPLPTTGTPG…VQPTFSDPPE (101 aa)) the chain is Extracellular. 2 disulfides stabilise this stretch: Cys68–Cys99 and Cys84–Cys131. Asn130 carries N-linked (GlcNAc...) asparagine glycosylation. Residues 144-165 (DVLLAMIIAPICLIPFLITLVV) traverse the membrane as a helical segment. Over 166–175 (WRSKDSEAQA) the chain is Cytoplasmic.

The protein belongs to the RAMP family. As to quaternary structure, heterodimer of CALCRL and RAMP2; the interaction forms the receptor complex for adrenomedullin/ADM. Heterodimer of CALCR and RAMP2; interaction forms the AMYR2 receptor complex for calcitonin/CALC and amylin/IAPP. Strongly expressed in lung, breast, immune system and fetal tissues.

The protein resides in the cell membrane. Functionally, accessory protein that interacts with and modulates the function of G-protein coupled receptors including calcitonin gene-related peptide type 1 receptor (CALCRL) and calcitonin receptor (CALCR). Required for the transport of CALCRL to the plasma membrane. Together with CALCRL, form a receptor complex for adrenomedullin/ADM. Together with CALCR, act as a receptor complex for calcitonin/CT/CALC. Together with CALCR, also act as a receptor complex for amylin/IAPP. This is Receptor activity-modifying protein 2 from Homo sapiens (Human).